The chain runs to 242 residues: Uridylate kinase (242 aa).

11–14 (KLSG) contributes to the ATP binding site. The interval 19–24 (GNMGYG) is involved in allosteric activation by GTP. Glycine 53 contributes to the UMP binding site. Glycine 54 and arginine 58 together coordinate ATP. UMP-binding positions include aspartate 73 and 134–141 (SGNPFFTT). Positions 161, 167, and 170 each coordinate ATP.

This sequence belongs to the UMP kinase family. In terms of assembly, homohexamer.

It is found in the cytoplasm. It carries out the reaction UMP + ATP = UDP + ADP. It functions in the pathway pyrimidine metabolism; CTP biosynthesis via de novo pathway; UDP from UMP (UMPK route): step 1/1. With respect to regulation, allosterically activated by GTP. Inhibited by UTP. Catalyzes the reversible phosphorylation of UMP to UDP. The chain is Uridylate kinase from Trichormus variabilis (strain ATCC 29413 / PCC 7937) (Anabaena variabilis).